We begin with the raw amino-acid sequence, 174 residues long: Bifunctional protein PyrR (174 aa).

The PRPP-binding motif lies at 97–109 (VVIVDDVLYTGRT).

Belongs to the purine/pyrimidine phosphoribosyltransferase family. PyrR subfamily. Homodimer and homohexamer; in equilibrium.

It catalyses the reaction UMP + diphosphate = 5-phospho-alpha-D-ribose 1-diphosphate + uracil. Functionally, regulates transcriptional attenuation of the pyrimidine nucleotide (pyr) operon by binding in a uridine-dependent manner to specific sites on pyr mRNA. This disrupts an antiterminator hairpin in the RNA and favors formation of a downstream transcription terminator, leading to a reduced expression of downstream genes. In terms of biological role, also displays a weak uracil phosphoribosyltransferase activity which is not physiologically significant. In Macrococcus caseolyticus (strain JCSC5402) (Macrococcoides caseolyticum), this protein is Bifunctional protein PyrR.